The primary structure comprises 642 residues: Poly(A) polymerase beta (642 aa).

ATP contacts are provided by residues 101–103, Thr110, 114–116, Asp168, Lys229, Tyr238, and 247–248; these read FGS, DID, and GV. 3 residues coordinate Mg(2+): Asp114, Asp116, and Asp168. Disordered stretches follow at residues 530 to 553 and 620 to 642; these read SENS…GNPQ and LVNH…ILGV. The segment covering 620 to 636 has biased composition (polar residues); that stretch reads LVNHPSRPSGNTATNIP.

The protein belongs to the poly(A) polymerase family. Interacts with GSG1. Mg(2+) serves as cofactor. The cofactor is Mn(2+). As to expression, testis specific.

It localises to the cytoplasm. Its subcellular location is the nucleus. It catalyses the reaction RNA(n) + ATP = RNA(n)-3'-adenine ribonucleotide + diphosphate. This chain is Poly(A) polymerase beta, found in Mus musculus (Mouse).